We begin with the raw amino-acid sequence, 254 residues long: MVNIKMTIQYDGTNYFGWQRQRKGRTIQATIEECLRKIFQREIKIRGAGRTDAGVHALGQVATFKAELKMSLDILKKVLNSLLPNDIKIIKLENVEDSFHPQHSVKRKSYIYYLCFDEECSCFIQRYVWHYPWKLDLSLMEEALSLFTGTKDFTAFSGSTDVKNKIRTVHDFTMQLLTKLCFMDMCLNGNFIKFRIEADGFLRYMVRNLVGCIIEIGKGKLRIESIQEAFESGKRPSTMQTAPSNGLFLEKVIY.

The Nucleophile role is filled by aspartate 52. Position 110 (tyrosine 110) interacts with substrate.

The protein belongs to the tRNA pseudouridine synthase TruA family. As to quaternary structure, homodimer.

It carries out the reaction uridine(38/39/40) in tRNA = pseudouridine(38/39/40) in tRNA. Functionally, formation of pseudouridine at positions 38, 39 and 40 in the anticodon stem and loop of transfer RNAs. This Thermodesulfovibrio yellowstonii (strain ATCC 51303 / DSM 11347 / YP87) protein is tRNA pseudouridine synthase A.